The primary structure comprises 35 residues: Photosystem II reaction center protein T (35 aa).

The helical transmembrane segment at 3–23 (ALVYTFLLVSTLGIIFFAIFF) threads the bilayer.

Belongs to the PsbT family. As to quaternary structure, PSII is composed of 1 copy each of membrane proteins PsbA, PsbB, PsbC, PsbD, PsbE, PsbF, PsbH, PsbI, PsbJ, PsbK, PsbL, PsbM, PsbT, PsbY, PsbZ, Psb30/Ycf12, at least 3 peripheral proteins of the oxygen-evolving complex and a large number of cofactors. It forms dimeric complexes.

It localises to the plastid. It is found in the chloroplast thylakoid membrane. Functionally, found at the monomer-monomer interface of the photosystem II (PS II) dimer, plays a role in assembly and dimerization of PSII. PSII is a light-driven water plastoquinone oxidoreductase, using light energy to abstract electrons from H(2)O, generating a proton gradient subsequently used for ATP formation. In Schisandra chinensis (Chinese magnolia vine), this protein is Photosystem II reaction center protein T.